Consider the following 372-residue polypeptide: Probable butyrate kinase (372 aa).

The protein belongs to the acetokinase family.

It localises to the cytoplasm. It catalyses the reaction butanoate + ATP = butanoyl phosphate + ADP. This is Probable butyrate kinase from Oleidesulfovibrio alaskensis (strain ATCC BAA-1058 / DSM 17464 / G20) (Desulfovibrio alaskensis).